The chain runs to 122 residues: S-adenosylmethionine decarboxylase proenzyme (122 aa).

Ser-63 functions as the Schiff-base intermediate with substrate; via pyruvic acid in the catalytic mechanism. Position 63 is a pyruvic acid (Ser); by autocatalysis (Ser-63). The active-site Proton acceptor; for processing activity is His-68. Cys-83 functions as the Proton donor; for catalytic activity in the catalytic mechanism.

This sequence belongs to the prokaryotic AdoMetDC family. Type 1 subfamily. Heterotetramer of two alpha and two beta chains arranged as a dimer of alpha/beta heterodimers. It depends on pyruvate as a cofactor. Is synthesized initially as an inactive proenzyme. Formation of the active enzyme involves a self-maturation process in which the active site pyruvoyl group is generated from an internal serine residue via an autocatalytic post-translational modification. Two non-identical subunits are generated from the proenzyme in this reaction, and the pyruvate is formed at the N-terminus of the alpha chain, which is derived from the carboxyl end of the proenzyme. The post-translation cleavage follows an unusual pathway, termed non-hydrolytic serinolysis, in which the side chain hydroxyl group of the serine supplies its oxygen atom to form the C-terminus of the beta chain, while the remainder of the serine residue undergoes an oxidative deamination to produce ammonia and the pyruvoyl group blocking the N-terminus of the alpha chain.

The catalysed reaction is S-adenosyl-L-methionine + H(+) = S-adenosyl 3-(methylsulfanyl)propylamine + CO2. Its pathway is amine and polyamine biosynthesis; S-adenosylmethioninamine biosynthesis; S-adenosylmethioninamine from S-adenosyl-L-methionine: step 1/1. Functionally, catalyzes the decarboxylation of S-adenosylmethionine to S-adenosylmethioninamine (dcAdoMet), the propylamine donor required for the synthesis of the polyamines spermine and spermidine from the diamine putrescine. This chain is S-adenosylmethionine decarboxylase proenzyme, found in Methanococcus maripaludis (strain C7 / ATCC BAA-1331).